A 461-amino-acid polypeptide reads, in one-letter code: tRNA modification GTPase MnmE (461 aa).

(6S)-5-formyl-5,6,7,8-tetrahydrofolate is bound by residues K32, E89, and K128. One can recognise a TrmE-type G domain in the interval 224 to 387 (GHALSIVGKP…LGQKISAFFP (164 aa)). Residue N234 coordinates K(+). GTP-binding positions include 234-239 (NAGKSS), 253-259 (SDIKGTT), and 278-281 (DTAG). Mg(2+) is bound at residue S238. 3 residues coordinate K(+): S253, I255, and T258. Residue T259 participates in Mg(2+) binding. K461 serves as a coordination point for (6S)-5-formyl-5,6,7,8-tetrahydrofolate.

This sequence belongs to the TRAFAC class TrmE-Era-EngA-EngB-Septin-like GTPase superfamily. TrmE GTPase family. In terms of assembly, homodimer. Heterotetramer of two MnmE and two MnmG subunits. K(+) serves as cofactor.

The protein resides in the cytoplasm. In terms of biological role, exhibits a very high intrinsic GTPase hydrolysis rate. Involved in the addition of a carboxymethylaminomethyl (cmnm) group at the wobble position (U34) of certain tRNAs, forming tRNA-cmnm(5)s(2)U34. The polypeptide is tRNA modification GTPase MnmE (Helicobacter pylori (strain HPAG1)).